Reading from the N-terminus, the 910-residue chain is ZZ-type zinc finger-containing protein 3 (910 aa).

Disordered stretches follow at residues 41–117 and 133–153; these read AHPE…RQAE and EATN…PGEH. Positions 67–84 are enriched in polar residues; it reads QKGTNNGRTSDVRQQSAR. 5 positions are modified to phosphoserine: Ser-89, Ser-96, Ser-137, Ser-138, and Ser-142. Over residues 96–116 the composition is skewed to basic and acidic residues; sequence SSSEKDDLERQALESCERRQA. Residues 142 to 153 show a composition bias toward basic and acidic residues; it reads SPVKPDKEPGEH. Residue Lys-283 forms a Glycyl lysine isopeptide (Lys-Gly) (interchain with G-Cter in SUMO2) linkage. 3 disordered regions span residues 303–358, 373–444, and 609–641; these read TAES…VSGE, TSLS…PQDG, and ARPK…SHNR. Polar residues-rich tracts occupy residues 331 to 347 and 397 to 434; these read SSAS…NPLD and SSPT…SESP. At Lys-401 the chain carries N6-acetyllysine. Ser-613 is subject to Phosphoserine. The segment covering 613 to 622 has biased composition (basic and acidic residues); it reads SPLDPKKDGE. Lys-654 is covalently cross-linked (Glycyl lysine isopeptide (Lys-Gly) (interchain with G-Cter in SUMO2)). The HTH myb-type domain occupies 654–714; it reads KPETFNQLWT…RVQKYFIKLT (61 aa). Positions 687–710 form a DNA-binding region, H-T-H motif; it reads WQKIADELGNRTAKQVASRVQKYF. Lys-708 is modified (N6-acetyllysine). Residue Lys-715 forms a Glycyl lysine isopeptide (Lys-Gly) (interchain with G-Cter in SUMO2) linkage. The ZZ-type zinc-finger motif lies at 825–884; it reads HVGFKCDNCGVEPIQGVRWHCQDCPPEMSLDFCDSCSDCPHETDIHKEDHQLEPVYKSET. Residues Cys-830, Cys-833, Cys-845, Cys-848, Cys-857, Cys-860, His-870, and His-874 each contribute to the Zn(2+) site.

As to quaternary structure, component of the ADA2A-containing complex (ATAC), composed of KAT14, KAT2A, TADA2L, TADA3L, ZZ3, MBIP, WDR5, YEATS2, CCDC101 and DR1. Interacts via (ZZ-type zinc finger) with histone H3 in a methylation-independent manner and acetylation on 'Lys-4' (H3K4ac) moderately enhances the interaction.

The protein localises to the nucleus. Functionally, histone H3 reader that is required for the ATAC complex-mediated maintenance of histone acetylation and gene activation. Component of the ATAC complex, a complex with histone acetyltransferase activity on histones H3 and H4. In Mus musculus (Mouse), this protein is ZZ-type zinc finger-containing protein 3 (Zzz3).